The sequence spans 325 residues: Probable WRKY transcription factor 11 (325 aa).

The WRKY DNA-binding region spans 240–306 (KIADIPPDEY…YEGEHRHNQS (67 aa)).

The protein belongs to the WRKY group II-d family. In young, mature and senescent leaves.

Its subcellular location is the nucleus. Its function is as follows. Transcription factor. Interacts specifically with the W box (5'-(T)TGAC[CT]-3'), a frequently occurring elicitor-responsive cis-acting element. Regulates rhizobacterium B.cereus AR156-induced systemic resistance (ISR) to P.syringae pv. tomato DC3000, probably by activating the jasmonic acid (JA)- signaling pathway. The chain is Probable WRKY transcription factor 11 (WRKY11) from Arabidopsis thaliana (Mouse-ear cress).